The following is a 76-amino-acid chain: Large ribosomal subunit protein bL31 (76 aa).

The protein belongs to the bacterial ribosomal protein bL31 family. Type A subfamily. In terms of assembly, part of the 50S ribosomal subunit.

Binds the 23S rRNA. In Beijerinckia indica subsp. indica (strain ATCC 9039 / DSM 1715 / NCIMB 8712), this protein is Large ribosomal subunit protein bL31.